The following is a 452-amino-acid chain: Tissue alpha-L-fucosidase (452 aa).

The N-terminal stretch at M1–A17 is a signal peptide. 4 N-linked (GlcNAc...) asparagine glycosylation sites follow: N227, N254, N368, and N378.

It belongs to the glycosyl hydrolase 29 family. Homotetramer.

The protein localises to the lysosome. The catalysed reaction is an alpha-L-fucoside + H2O = L-fucose + an alcohol. The enzyme catalyses a neolactoside IV(2)-alpha-Fuc-nLc4Cer(d18:1(4E)) + H2O = a neolactoside nLc4Cer(d18:1(4E)) + L-fucose. It catalyses the reaction a neolactoside IV(2)-alpha-Fuc-nLc4Cer(d18:0) + H2O = a neolactoside nLc4Cer(d18:0) + L-fucose. Functionally, alpha-L-fucosidase is responsible for hydrolyzing the alpha-1,6-linked fucose joined to the reducing-end N-acetylglucosamine of the carbohydrate moieties of glycoproteins. This chain is Tissue alpha-L-fucosidase (Fuca1), found in Mus musculus (Mouse).